A 275-amino-acid chain; its full sequence is Interleukin-2 receptor subunit alpha (275 aa).

The N-terminal stretch at 1–21 is a signal peptide; sequence MEPSLLMWRFFVFIVVPGCVT. 2 Sushi domains span residues 22 to 81 and 121 to 186; these read EACH…FCNS and GHCE…KCIS. The Extracellular segment spans residues 22–243; sequence EACHDDPPSL…DTFIFTTEYQ (222 aa). 3 disulfides stabilise this stretch: Cys24-Cys64, Cys49-Cys77, and Cys51-Cys79. The N-linked (GlcNAc...) asparagine glycan is linked to Asn80. A disordered region spans residues 86-130; it reads KNPVKPVTPGSEEQRERKPTDAQSQTQPPEQADLPGHCEEPPPWE. Basic and acidic residues predominate over residues 121 to 130; the sequence is GHCEEPPPWE. Disulfide bonds link Cys123–Cys168 and Cys152–Cys184. Residues 188–213 are disordered; the sequence is GANSQAPDEAEPPESTEAPPGSGTFL. A helical membrane pass occupies residues 244 to 262; it reads IAVAGCILLLSSILLLSCL. At 263 to 275 the chain is on the cytoplasmic side; the sequence is TWQRRWKKNRRTI.

In terms of assembly, non-covalent dimer of an alpha and a beta subunit. IL2R exists in 3 different forms: a high affinity dimer, an intermediate affinity monomer (beta subunit), and a low affinity monomer (alpha subunit). The high and intermediate affinity forms also associate with a gamma subunit.

The protein resides in the membrane. Functionally, receptor for interleukin-2. The receptor is involved in the regulation of immune tolerance by controlling regulatory T cells (TREGs) activity. TREGs suppress the activation and expansion of autoreactive T-cells. In Ovis aries (Sheep), this protein is Interleukin-2 receptor subunit alpha (IL2RA).